The chain runs to 294 residues: 4-hydroxy-tetrahydrodipicolinate synthase (294 aa).

T46 provides a ligand contact to pyruvate. Y134 (proton donor/acceptor) is an active-site residue. The Schiff-base intermediate with substrate role is filled by K163. Residue I205 participates in pyruvate binding.

The protein belongs to the DapA family. In terms of assembly, homotetramer; dimer of dimers.

It localises to the cytoplasm. The catalysed reaction is L-aspartate 4-semialdehyde + pyruvate = (2S,4S)-4-hydroxy-2,3,4,5-tetrahydrodipicolinate + H2O + H(+). It functions in the pathway amino-acid biosynthesis; L-lysine biosynthesis via DAP pathway; (S)-tetrahydrodipicolinate from L-aspartate: step 3/4. Catalyzes the condensation of (S)-aspartate-beta-semialdehyde [(S)-ASA] and pyruvate to 4-hydroxy-tetrahydrodipicolinate (HTPA). This chain is 4-hydroxy-tetrahydrodipicolinate synthase, found in Clostridium tetani (strain Massachusetts / E88).